The chain runs to 327 residues: Phenylalanine--tRNA ligase alpha subunit (327 aa).

Residue glutamate 252 coordinates Mg(2+).

This sequence belongs to the class-II aminoacyl-tRNA synthetase family. Phe-tRNA synthetase alpha subunit type 1 subfamily. Tetramer of two alpha and two beta subunits. The cofactor is Mg(2+).

It localises to the cytoplasm. The enzyme catalyses tRNA(Phe) + L-phenylalanine + ATP = L-phenylalanyl-tRNA(Phe) + AMP + diphosphate + H(+). In Glaesserella parasuis serovar 5 (strain SH0165) (Haemophilus parasuis), this protein is Phenylalanine--tRNA ligase alpha subunit.